Reading from the N-terminus, the 367-residue chain is Probable neutral protease 2 homolog MCYG_00239 (367 aa).

Residues 1–19 (MQVLVALAALSSLAAPVVG) form the signal peptide. A propeptide spanning residues 20–190 (FSIPRGVPVS…DGPFTRIDKR (171 aa)) is cleaved from the precursor. 3 disulfide bridges follow: C198–C268, C275–C293, and C307–C367. Residue H318 coordinates Zn(2+). E319 is a catalytic residue. Residues H322 and D333 each contribute to the Zn(2+) site.

Belongs to the peptidase M35 family. The cofactor is Zn(2+).

It is found in the secreted. The enzyme catalyses Preferential cleavage of bonds with hydrophobic residues in P1'. Also 3-Asn-|-Gln-4 and 8-Gly-|-Ser-9 bonds in insulin B chain.. Its function is as follows. Probable secreted metalloprotease that shows high activities on basic nuclear substrates such as histone and protamine. May be involved in virulence. This is Probable neutral protease 2 homolog MCYG_00239 from Arthroderma otae (strain ATCC MYA-4605 / CBS 113480) (Microsporum canis).